Here is a 268-residue protein sequence, read N- to C-terminus: 4-diphosphocytidyl-2-C-methyl-D-erythritol kinase (268 aa).

Residue K9 is part of the active site. ATP is bound at residue 88–98 (PPGAGLGGGSS). D130 is a catalytic residue.

Belongs to the GHMP kinase family. IspE subfamily.

The enzyme catalyses 4-CDP-2-C-methyl-D-erythritol + ATP = 4-CDP-2-C-methyl-D-erythritol 2-phosphate + ADP + H(+). It functions in the pathway isoprenoid biosynthesis; isopentenyl diphosphate biosynthesis via DXP pathway; isopentenyl diphosphate from 1-deoxy-D-xylulose 5-phosphate: step 3/6. Catalyzes the phosphorylation of the position 2 hydroxy group of 4-diphosphocytidyl-2C-methyl-D-erythritol. The protein is 4-diphosphocytidyl-2-C-methyl-D-erythritol kinase of Aquifex aeolicus (strain VF5).